The following is a 205-amino-acid chain: MTKIVRSKYKASRRLGVSLWGDSKDAFNTRNYRPGQHGQNTMIKTSDYGLHLKAKQRLKCYYGRVTEKQFRNIFALAQRMKGNTGENFIGLLESRLDTVVYRMNIAPTIFAARQLVSHGHIKLNGKKADIASIRLKEGDIIEIKESIQQIPLIQESISKQGQTTPGYLSFDIPSLTGKYLRVPALSDVPYPFEAEVHLVIELYSR.

The S4 RNA-binding domain maps to 94–157 (SRLDTVVYRM…QQIPLIQESI (64 aa)).

This sequence belongs to the universal ribosomal protein uS4 family. As to quaternary structure, part of the 30S ribosomal subunit. Contacts protein S5. The interaction surface between S4 and S5 is involved in control of translational fidelity.

In terms of biological role, one of the primary rRNA binding proteins, it binds directly to 16S rRNA where it nucleates assembly of the body of the 30S subunit. Its function is as follows. With S5 and S12 plays an important role in translational accuracy. This Rickettsia prowazekii (strain Madrid E) protein is Small ribosomal subunit protein uS4.